A 154-amino-acid chain; its full sequence is CASP-like protein 5B2 (154 aa).

Over 1–17 the chain is Cytoplasmic; sequence MAGLAGRPGSWGGLVLR. A helical membrane pass occupies residues 18-38; that stretch reads VGQALFAAACIGVMGSSLGFA. Topologically, residues 39–42 are extracellular; sequence SYTA. The helical transmembrane segment at 43–63 threads the bilayer; the sequence is FCYLIASMGLQMLWSFGLACL. At 64-87 the chain is on the cytoplasmic side; the sequence is DGYAIRANKDLTSPILLSLFVVGD. The helical transmembrane segment at 88–107 threads the bilayer; it reads WVTAILSFAASSSAAGVVIL. Over 108-130 the chain is Extracellular; sequence FQKDVLFCRRYPQLPCGKYELAT. A helical transmembrane segment spans residues 131 to 151; sequence AFAFLSWALSATSALIMFWLL. At 152 to 154 the chain is on the cytoplasmic side; that stretch reads AAF.

This sequence belongs to the Casparian strip membrane proteins (CASP) family. Homodimer and heterodimers.

It is found in the cell membrane. In Zea mays (Maize), this protein is CASP-like protein 5B2.